We begin with the raw amino-acid sequence, 168 residues long: Cyanate hydratase (168 aa).

Catalysis depends on residues Arg91, Glu94, and Ser117.

Belongs to the cyanase family.

It carries out the reaction cyanate + hydrogencarbonate + 3 H(+) = NH4(+) + 2 CO2. In terms of biological role, catalyzes the reaction of cyanate with bicarbonate to produce ammonia and carbon dioxide. The chain is Cyanate hydratase from Arabidopsis thaliana (Mouse-ear cress).